The following is a 409-amino-acid chain: Argininosuccinate synthase (409 aa).

ATP is bound by residues 12–20 (AYSGGLDTS) and Ala39. Residues Tyr90 and Ser95 each contribute to the L-citrulline site. ATP is bound at residue Gly120. Thr122, Asn126, and Asp127 together coordinate L-aspartate. Asn126 provides a ligand contact to L-citrulline. 5 residues coordinate L-citrulline: Arg130, Ser181, Ser190, Glu266, and Tyr278.

This sequence belongs to the argininosuccinate synthase family. Type 1 subfamily. In terms of assembly, homotetramer.

It is found in the cytoplasm. It catalyses the reaction L-citrulline + L-aspartate + ATP = 2-(N(omega)-L-arginino)succinate + AMP + diphosphate + H(+). Its pathway is amino-acid biosynthesis; L-arginine biosynthesis; L-arginine from L-ornithine and carbamoyl phosphate: step 2/3. The polypeptide is Argininosuccinate synthase (Acidiphilium cryptum (strain JF-5)).